The chain runs to 235 residues: Sugar fermentation stimulation protein homolog (235 aa).

This sequence belongs to the SfsA family.

The protein is Sugar fermentation stimulation protein homolog of Photorhabdus laumondii subsp. laumondii (strain DSM 15139 / CIP 105565 / TT01) (Photorhabdus luminescens subsp. laumondii).